We begin with the raw amino-acid sequence, 142 residues long: MVLTAGDKANVKTVWSKVGSHLEEYGSETLERLFIVYPSTKTYFPHFDLHHDSAQVRAHGRKVLSALGEAVNHIDDIPGALSKLSDLHAQTLRVDPVNFKLLNLCFVVVVGRHHPTILTPEVHVSLDKFLSAVATALTSKYR.

Residues 2 to 142 enclose the Globin domain; the sequence is VLTAGDKANV…VATALTSKYR (141 aa). Positions 59 and 88 each coordinate heme b.

It belongs to the globin family. Heterotetramer of two alpha-A chains and two beta chains. Red blood cells.

Its function is as follows. Involved in oxygen transport from the lung to the various peripheral tissues. This Chelonoidis niger (Galapagos giant tortoise) protein is Hemoglobin subunit alpha-A.